Here is a 382-residue protein sequence, read N- to C-terminus: SOX domain-containing protein dichaete (382 aa).

Disordered regions lie at residues 53–142 (GGSP…EGHI) and 346–382 (YPSSSTSSPGSSPGTITPNGMDGSMDSALRRPVPVLY). Gly residues predominate over residues 60 to 69 (AGQGVNGSSG). Positions 96–123 (NSSIGSAGSLGSQSSLGSNGSGLNSSSG) are enriched in low complexity. Positions 142 to 210 (IKRPMNAFMV…LHMKEHPDYK (69 aa)) form a DNA-binding region, HMG box. Positions 347–360 (PSSSTSSPGSSPGT) are enriched in low complexity.

In terms of tissue distribution, initially expressed in a pair-rule-like pattern which is rapidly replaced by strong neuroectoderm expression.

It is found in the nucleus. Essential for segmentation and CNS development. May modulate the actions of other transcription factors, including gap and pair-rule proteins. This chain is SOX domain-containing protein dichaete (D), found in Drosophila melanogaster (Fruit fly).